A 20-amino-acid polypeptide reads, in one-letter code: Small ribosomal subunit protein bS20 (20 aa).

The disordered stretch occupies residues 1-20; that stretch reads ANNPGARKAIRKIEARTEVN. The span at 11-20 shows a compositional bias: basic and acidic residues; the sequence is RKIEARTEVN.

This sequence belongs to the bacterial ribosomal protein bS20 family.

In terms of biological role, binds directly to 16S ribosomal RNA. The sequence is that of Small ribosomal subunit protein bS20 (rpsT) from Brevundimonas vesicularis (Pseudomonas vesicularis).